We begin with the raw amino-acid sequence, 420 residues long: Tyrosine--tRNA ligase 2 (420 aa).

Tyrosine 34 is a binding site for L-tyrosine. A 'HIGH' region motif is present at residues 39 to 48; it reads PTGDSMHIGH. Residues tyrosine 168 and glutamine 172 each coordinate L-tyrosine. A 'KMSKS' region motif is present at residues 230 to 234; it reads KFGKS. An ATP-binding site is contributed by lysine 233. An S4 RNA-binding domain is found at 352 to 418; it reads KNIVEWLVDL…GKKNYSLVKL (67 aa).

It belongs to the class-I aminoacyl-tRNA synthetase family. TyrS type 1 subfamily. Homodimer.

The protein resides in the cytoplasm. It catalyses the reaction tRNA(Tyr) + L-tyrosine + ATP = L-tyrosyl-tRNA(Tyr) + AMP + diphosphate + H(+). Catalyzes the attachment of tyrosine to tRNA(Tyr) in a two-step reaction: tyrosine is first activated by ATP to form Tyr-AMP and then transferred to the acceptor end of tRNA(Tyr). The chain is Tyrosine--tRNA ligase 2 from Bacillus cereus (strain ATCC 14579 / DSM 31 / CCUG 7414 / JCM 2152 / NBRC 15305 / NCIMB 9373 / NCTC 2599 / NRRL B-3711).